A 474-amino-acid chain; its full sequence is Nuclear receptor ROR-alpha B (474 aa).

The nuclear receptor DNA-binding region spans 14 to 89 (SIPCKICGDK…VGMSRDAVKF (76 aa)). 2 NR C4-type zinc fingers span residues 17–37 (CKIC…CEGC) and 53–72 (CPRQ…CQHC). Basic and acidic residues predominate over residues 98-124 (DSLFAEVQKHRQQQQDDKTGDESEKNQ). A disordered region spans residues 98-144 (DSLFAEVQKHRQQQQDDKTGDESEKNQESQAPGEAEPLTPSYALSSS). Residues 223–461 (DLEHLSENIC…TRFPPLYKEL (239 aa)) enclose the NR LBD domain. The AF-2 stretch occupies residues 450–461 (VHTRFPPLYKEL).

It belongs to the nuclear hormone receptor family.

It is found in the nucleus. Its function is as follows. Nuclear receptor that binds DNA as a monomer to ROR response elements (RORE). Required for proper cerebellum development. The protein is Nuclear receptor ROR-alpha B (rorab) of Danio rerio (Zebrafish).